A 373-amino-acid chain; its full sequence is Chorismate synthase (373 aa).

Arg-46 contacts NADP(+). FMN-binding positions include 123-125 (RSS), 251-252 (NA), Gly-295, 310-314 (KPTPS), and Arg-337.

This sequence belongs to the chorismate synthase family. It depends on FMNH2 as a cofactor.

The catalysed reaction is 5-O-(1-carboxyvinyl)-3-phosphoshikimate = chorismate + phosphate. The protein operates within metabolic intermediate biosynthesis; chorismate biosynthesis; chorismate from D-erythrose 4-phosphate and phosphoenolpyruvate: step 7/7. Catalyzes the anti-1,4-elimination of the C-3 phosphate and the C-6 proR hydrogen from 5-enolpyruvylshikimate-3-phosphate (EPSP) to yield chorismate, which is the branch point compound that serves as the starting substrate for the three terminal pathways of aromatic amino acid biosynthesis. This reaction introduces a second double bond into the aromatic ring system. This chain is Chorismate synthase, found in Methanococcus maripaludis (strain C5 / ATCC BAA-1333).